Consider the following 455-residue polypeptide: GTPase Der (455 aa).

EngA-type G domains lie at 4–174 (PIVA…PAGQ) and 183–358 (LKIA…SERN). GTP is bound by residues 10–17 (GRPNVGKS), 57–61 (DTAGL), 126–129 (NKAD), 189–196 (GRPNVGKS), 236–240 (DTAGI), and 301–304 (NKWD). The KH-like domain occupies 359–444 (KRVSTSDINN…PIILVFKGRE (86 aa)).

Belongs to the TRAFAC class TrmE-Era-EngA-EngB-Septin-like GTPase superfamily. EngA (Der) GTPase family. Associates with the 50S ribosomal subunit.

In terms of biological role, GTPase that plays an essential role in the late steps of ribosome biogenesis. This chain is GTPase Der, found in Herpetosiphon aurantiacus (strain ATCC 23779 / DSM 785 / 114-95).